The chain runs to 518 residues: Zinc finger protein 449 (518 aa).

Residues 30 to 112 (RQRFRQFQYR…SLIEDLQREL (83 aa)) form the SCAN box domain. Polar residues predominate over residues 292–304 (NPTLGETPENSNL). Residues 292-325 (NPTLGETPENSNLEEPLNPKPHKKKSPGEKPHRC) form a disordered region. 7 C2H2-type zinc fingers span residues 323 to 345 (HRCPQCGKCFARKSQLTGHQRIH), 351 to 373 (HKCPECGKRFLRSSDLYRHQRLH), 379 to 401 (YECTVCKKRFTRRSHLIGHQRTH), 407 to 429 (YKCLECGKSFCHGSSLKRHLKTH), 435 to 457 (HRCHNCGKSFSRLTALTLHQRTH), 463 to 485 (FKCNYCGKSFRQRPSLVIHLRIH), and 491 to 513 (YKCTHCSKSFRQRAGLIMHQVTH).

The protein belongs to the krueppel C2H2-type zinc-finger protein family.

It is found in the nucleus. May be involved in transcriptional regulation. This is Zinc finger protein 449 (ZNF449) from Gorilla gorilla gorilla (Western lowland gorilla).